The primary structure comprises 251 residues: Putative glutamine amidotransferase YLR126C (251 aa).

The Glutamine amidotransferase type-1 domain occupies 48–232 (EVFHVQKNVF…NRYERQCQEL (185 aa)). Catalysis depends on for GATase activity residues cysteine 112, histidine 198, and glutamate 200.

Its subcellular location is the cytoplasm. Functionally, may have a role in copper and iron homeostasis. The protein is Putative glutamine amidotransferase YLR126C of Saccharomyces cerevisiae (strain ATCC 204508 / S288c) (Baker's yeast).